The following is a 243-amino-acid chain: Large ribosomal subunit protein uL2 (243 aa).

Positions 198–243 (VDHPFGGGGRQHPGKPKSVSRDTPPGRKVGDIASKRTGRGGKGGQE) are disordered. The span at 221-231 (PPGRKVGDIAS) shows a compositional bias: basic and acidic residues.

The protein belongs to the universal ribosomal protein uL2 family. Part of the 50S ribosomal subunit. Forms a bridge to the 30S subunit in the 70S ribosome.

One of the primary rRNA binding proteins. Required for association of the 30S and 50S subunits to form the 70S ribosome, for tRNA binding and peptide bond formation. It has been suggested to have peptidyltransferase activity; this is somewhat controversial. Makes several contacts with the 16S rRNA in the 70S ribosome. The protein is Large ribosomal subunit protein uL2 of Natronomonas pharaonis (strain ATCC 35678 / DSM 2160 / CIP 103997 / JCM 8858 / NBRC 14720 / NCIMB 2260 / Gabara) (Halobacterium pharaonis).